A 213-amino-acid chain; its full sequence is CDP-diacylglycerol--inositol 3-phosphatidyltransferase (213 aa).

The Cytoplasmic segment spans residues 1–5 (MPEEN). The helical transmembrane segment at 6-26 (IFLFVPNLIGYARIVFAIISF) threads the bilayer. Position 27 (Tyr-27) is a topological domain, lumenal. Residues 28 to 48 (FMPCCPFTASSFYLLSGLLDA) traverse the membrane as a helical segment. Asp-47 and Asp-50 together coordinate Mg(2+). Over 49–73 (FDGHAARALNQGTRFGAMLDMLTDR) the chain is Cytoplasmic. Residues Gly-51, Arg-55, and Thr-61 each contribute to the a CDP-1,2-diacyl-sn-glycerol site. The Mg(2+) site is built by Asp-68 and Asp-72. The Proton acceptor role is filled by Asp-72. The helical transmembrane segment at 74 to 94 (CATMCLLVNLALLYPRATLLF) threads the bilayer. Position 95 (Gln-95) is a topological domain, lumenal. A helical transmembrane segment spans residues 96–116 (LSMSLDVASHWLHLHSSVVRG). At 117-139 (SESHKMIDLSGNPVLRIYYTSRP) the chain is on the cytoplasmic side. The helical transmembrane segment at 140–160 (ALFTLCAGNELFYCLLYLFNF) threads the bilayer. The Lumenal portion of the chain corresponds to 161–174 (SEGPLVGSVGLFRM). A helical membrane pass occupies residues 175-195 (GLWVTAPIALLKSVISVIHLI). At 196 to 213 (TAARNMAALDAADRAKKK) the chain is on the cytoplasmic side.

It belongs to the CDP-alcohol phosphatidyltransferase class-I family. The cofactor is Mn(2+). Requires Mg(2+) as cofactor.

The protein localises to the endoplasmic reticulum membrane. It localises to the cell membrane. It catalyses the reaction a CDP-1,2-diacyl-sn-glycerol + myo-inositol = a 1,2-diacyl-sn-glycero-3-phospho-(1D-myo-inositol) + CMP + H(+). Functionally, catalyzes the biosynthesis of phosphatidylinositol (PtdIns) as well as PtdIns:inositol exchange reaction. May thus act to reduce an excessive cellular PtdIns content. The exchange activity is due to the reverse reaction of PtdIns synthase and is dependent on CMP, which is tightly bound to the enzyme. The chain is CDP-diacylglycerol--inositol 3-phosphatidyltransferase from Mus musculus (Mouse).